The following is a 422-amino-acid chain: Phospho-N-acetylmuramoyl-pentapeptide-transferase (422 aa).

Transmembrane regions (helical) follow at residues 28–48, 71–91, 95–115, 136–156, 211–231, 246–266, 279–299, 313–333, and 399–419; these read LMAI…FINL, VGVP…PCLL, LHNI…SLGF, IIGQ…SPDV, AGWI…SNGA, AIIG…EFAG, LVIF…YNAY, IGGI…IPIL, and KITV…IITL.

This sequence belongs to the glycosyltransferase 4 family. MraY subfamily. It depends on Mg(2+) as a cofactor.

The protein localises to the cell inner membrane. The catalysed reaction is UDP-N-acetyl-alpha-D-muramoyl-L-alanyl-gamma-D-glutamyl-meso-2,6-diaminopimeloyl-D-alanyl-D-alanine + di-trans,octa-cis-undecaprenyl phosphate = di-trans,octa-cis-undecaprenyl diphospho-N-acetyl-alpha-D-muramoyl-L-alanyl-D-glutamyl-meso-2,6-diaminopimeloyl-D-alanyl-D-alanine + UMP. It participates in cell wall biogenesis; peptidoglycan biosynthesis. Functionally, catalyzes the initial step of the lipid cycle reactions in the biosynthesis of the cell wall peptidoglycan: transfers peptidoglycan precursor phospho-MurNAc-pentapeptide from UDP-MurNAc-pentapeptide onto the lipid carrier undecaprenyl phosphate, yielding undecaprenyl-pyrophosphoryl-MurNAc-pentapeptide, known as lipid I. The chain is Phospho-N-acetylmuramoyl-pentapeptide-transferase from Bacteroides fragilis (strain ATCC 25285 / DSM 2151 / CCUG 4856 / JCM 11019 / LMG 10263 / NCTC 9343 / Onslow / VPI 2553 / EN-2).